The following is a 247-amino-acid chain: Terpene cyclase adrI (247 aa).

5 helical membrane-spanning segments follow: residues 20–40 (VAEF…FSML), 51–71 (TGIF…FIYP), 76–96 (HWEG…FFII), 112–132 (NLYF…YSFA), and 141–161 (FFYG…AQIL). N-linked (GlcNAc...) asparagine glycosylation occurs at N164. The next 2 helical transmembrane spans lie at 179 to 199 (FGGF…GPWF) and 205 to 225 (KFYI…YYVI).

It belongs to the paxB family.

It localises to the membrane. It functions in the pathway secondary metabolite biosynthesis; terpenoid biosynthesis. In terms of biological role, terpene cyclase; part of the gene cluster that mediates the biosynthesis of andrastins, meroterpenoid compounds that exhibit inhibitory activity against ras farnesyltransferase, suggesting that they could be promising leads for antitumor agents. The first step of the pathway is the synthesis of 3,5-dimethylorsellinic acid (DMOA) by the polyketide synthase adrD via condensation of one acetyl-CoA starter unit with 3 malonyl-CoA units and 2 methylations. DMAO is then converted to farnesyl-DMAO by the prenyltransferase adrG. The methyltransferase adrK catalyzes the methylation of the carboxyl group of farnesyl-DMAO to farnesyl-DMAO methyl ester which is further converted to epoxyfarnesyl-DMAO methyl ester by the FAD-dependent monooxygenase adrH. The terpene cyclase adrI then catalyzes the carbon skeletal rearrangement to generate the andrastin E, the first compound in the pathway having the andrastin scaffold, with the tetracyclic ring system. The post-cyclization tailoring enzymes adrF, adrE, adrJ, and adrA, are involved in the conversion of andrastin E into andrastin A. The short chain dehydrogenase adrF is responsible for the oxidation of the C-3 a hydroxyl group of andrastin E to yield the corresponding ketone, andrastin D. The ketoreductase adrE stereoselectively reduces the carbonyl moiety to reverse the stereochemistry of the C-3 position to yield andrastin F. The acetyltransferase adrJ is the acetyltransferase that attaches the acetyl group to the C-3 hydroxyl group of andrastin F to yield andrastin C. Finally, the cytochrome P450 monooxygenase adrA catalyzes two sequential oxidation reactions of the C-23 methyl group, to generate the corresponding alcohol andrastin B, and aldehyde andrastin A. The polypeptide is Terpene cyclase adrI (Penicillium rubens (strain ATCC 28089 / DSM 1075 / NRRL 1951 / Wisconsin 54-1255) (Penicillium chrysogenum)).